The following is a 64-amino-acid chain: Hypoxia-inducible lipid droplet-associated protein (64 aa).

The required for targeting to lipid droplets stretch occupies residues 1–37 (MKFMLNLYVLGIMLTLLSIFVRVMESLGGLLESPLPG). A helical transmembrane segment spans residues 7-24 (LYVLGIMLTLLSIFVRVM). The span at 42–51 (TRGQLANTQP) shows a compositional bias: polar residues. The interval 42–64 (TRGQLANTQPPKGLPDHPSRGVQ) is disordered. Residues 55–64 (LPDHPSRGVQ) are compositionally biased toward basic and acidic residues.

It is found in the lipid droplet. The protein localises to the secreted. It localises to the membrane. Its function is as follows. Increases intracellular lipid accumulation. Stimulates expression of cytokines including IL6, MIF and VEGFA. Enhances cell growth and proliferation. This is Hypoxia-inducible lipid droplet-associated protein (Hilpda) from Mus musculus (Mouse).